Here is a 654-residue protein sequence, read N- to C-terminus: MICOS complex subunit MIC60-2 (654 aa).

Residues 1–12 (MRGSRNLLTQRL) constitute a mitochondrion transit peptide. Residues 13–20 (ASSRATGS) are Mitochondrial matrix-facing. A helical transmembrane segment spans residues 21 to 43 (SGGLKFVGATVGAVTAGAAGVAG). Residues 44-654 (YASYDNEFRK…AALTSIRSTY (611 aa)) lie on the Mitochondrial intermembrane side of the membrane. Basic and acidic residues predominate over residues 115–129 (LKETTEPKKIEKKPE). The segment at 115-140 (LKETTEPKKIEKKPENPYIGAKTPLN) is disordered.

It belongs to the MICOS complex subunit Mic60 family. As to quaternary structure, component of the mitochondrial contact site and cristae organizing system (MICOS) complex. As to expression, expressed in the gonads and muscle cells.

Its subcellular location is the mitochondrion inner membrane. It localises to the cytoplasm. Functionally, sustains mitochondrial morphology probably through maintaining cristae morphology. May act as a component of the MICOS complex, a large protein complex of the mitochondria. In Caenorhabditis elegans, this protein is MICOS complex subunit MIC60-2.